The following is a 124-amino-acid chain: Ribonuclease pancreatic (124 aa).

Residues K7 and R10 each coordinate substrate. H12 serves as the catalytic Proton acceptor. Cystine bridges form between C26/C84, C40/C95, C58/C110, and C65/C72. N34 carries an N-linked (GlcNAc...) asparagine; partial glycan. Residues 41 to 45 (KPVBT), K66, and R85 each bind substrate. H119 functions as the Proton donor in the catalytic mechanism.

Belongs to the pancreatic ribonuclease family. Monomer. Interacts with and forms tight 1:1 complexes with RNH1. Dimerization of two such complexes may occur. Interaction with RNH1 inhibits this protein. Pancreas.

It localises to the secreted. The catalysed reaction is an [RNA] containing cytidine + H2O = an [RNA]-3'-cytidine-3'-phosphate + a 5'-hydroxy-ribonucleotide-3'-[RNA].. It carries out the reaction an [RNA] containing uridine + H2O = an [RNA]-3'-uridine-3'-phosphate + a 5'-hydroxy-ribonucleotide-3'-[RNA].. In terms of biological role, endonuclease that catalyzes the cleavage of RNA on the 3' side of pyrimidine nucleotides. Acts on single-stranded and double-stranded RNA. This is Ribonuclease pancreatic (RNASE1) from Damaliscus korrigum (Topi).